Consider the following 451-residue polypeptide: MSFKPVVALVGRPNVGKSTLFNRLTRSRAALVADFSGLTRDRHYGEGRVGDTPFLVIDTGGFEPVAKDGILAEMARQTRQAIAEADVVVFLVDARAGVNAHDHEIARLLRKSGQQRVLLAVNKAEGMGVGNATGDFHELGLGEPHPISAAHGDGIVDLIEIALSGLVAPPADTGEQLEQDVVDHRIKLAIVGRPNVGKSTLINTLLGEERVIAFDMPGTTRDAIEIDFERDGRKYTLIDTAGLRKRGKVFEAIEKFSVIKTLQAIEASNVVLLMIDAQAEVSEQDAHIAGFVLETGRAVVVAINKWDGLDSDQRERIEREFQRKLRFLGFARMHTISALKGQGVKPLLKSVNAAHAAAFAKLSTPRLTRELQAAVEQQPPPRKGIFRPKMRYAHQGGQNPPLIVIHGNALDAVPDSYRRYLETRFRNAFDLAGTPLRIEFKSSRNPYVQEN.

EngA-type G domains lie at 5–170 (PVVA…VAPP) and 186–359 (IKLA…AAAF). GTP is bound by residues 11–18 (GRPNVGKS), 58–62 (DTGGF), 122–125 (NKAE), 192–199 (GRPNVGKS), 239–243 (DTAGL), and 304–307 (NKWD). Residues 360–444 (AKLSTPRLTR…PLRIEFKSSR (85 aa)) form the KH-like domain.

This sequence belongs to the TRAFAC class TrmE-Era-EngA-EngB-Septin-like GTPase superfamily. EngA (Der) GTPase family. Associates with the 50S ribosomal subunit.

In terms of biological role, GTPase that plays an essential role in the late steps of ribosome biogenesis. In Bordetella bronchiseptica (strain ATCC BAA-588 / NCTC 13252 / RB50) (Alcaligenes bronchisepticus), this protein is GTPase Der.